We begin with the raw amino-acid sequence, 320 residues long: Putative malonate transporter (320 aa).

Helical transmembrane passes span 1-21, 32-52, 65-85, 113-133, 167-187, 196-216, 256-276, and 289-309; these read MAEITGLVLPFFGLIFLGYLT, MGWLNTFIVYLALPALFFKLV, FILTSVGTTYVVFALIFAIGL, GLALLALGETAAVPVALIFCF, IAFHPFILSTFAGVAAAFLSF, LIDYLAQAAAPCALFAMGVTL, IWVQTAVLLASLPTATNVFVI, and ATILITTLLSVATVTGLLYLI.

This sequence belongs to the auxin efflux carrier (TC 2.A.69) family.

It localises to the cell membrane. The chain is Putative malonate transporter (mdcF) from Rhizobium meliloti (strain 1021) (Ensifer meliloti).